A 59-amino-acid polypeptide reads, in one-letter code: Large ribosomal subunit protein bL32 (59 aa).

Residues 1-59 (MAVQQNRKTPSKRGMRRSHDALSGPALSVEPQTGETHRRHHVSPDGYYRGRKVMQGRED) are disordered. Residues 49 to 59 (RGRKVMQGRED) show a composition bias toward basic residues.

It belongs to the bacterial ribosomal protein bL32 family.

The polypeptide is Large ribosomal subunit protein bL32 (Alkalilimnicola ehrlichii (strain ATCC BAA-1101 / DSM 17681 / MLHE-1)).